The following is a 149-amino-acid chain: Transcriptional repressor NrdR (149 aa).

A zinc finger spans residues 3–34 (CPFCSHQETQVVETRVSEDGDFIRRRRQCGAC). Residues 49-139 (PTVVKKDGRR…VYRSFEDIDE (91 aa)) enclose the ATP-cone domain.

It belongs to the NrdR family. Zn(2+) serves as cofactor.

Negatively regulates transcription of bacterial ribonucleotide reductase nrd genes and operons by binding to NrdR-boxes. The protein is Transcriptional repressor NrdR of Acidovorax sp. (strain JS42).